The following is a 72-amino-acid chain: Conotoxin VnMKLT2-0221 (72 aa).

The signal sequence occupies residues 1-22; sequence MKLTCVLIVAVLFLTACQLTTA. Positions 23–45 are excised as a propeptide; it reads ASYARSERQHPDLGSSDQNSKLT. The interval 26 to 45 is disordered; sequence ARSERQHPDLGSSDQNSKLT. 3 disulfides stabilise this stretch: C48–C62, C55–C66, and C61–C71.

Belongs to the conotoxin O1 superfamily. Expressed by the venom duct.

It is found in the secreted. This Conus ventricosus (Mediterranean cone) protein is Conotoxin VnMKLT2-0221.